Consider the following 151-residue polypeptide: Putative phosphatidylglycerol/phosphatidylinositol transfer protein 1 (151 aa).

Positions methionine 1–serine 26 are cleaved as a signal peptide.

Belongs to the NPC2 family. As to quaternary structure, monomer.

Its function is as follows. Catalyzes the intermembrane transfer of phosphatidylglycerol and phosphatidylinositol. This Dictyostelium discoideum (Social amoeba) protein is Putative phosphatidylglycerol/phosphatidylinositol transfer protein 1.